Consider the following 27-residue polypeptide: Cupiennin-4b (27 aa).

At Gln-27 the chain carries Glutamine amide.

In terms of tissue distribution, expressed by the venom gland.

It is found in the secreted. The polypeptide is Cupiennin-4b (Cupiennius salei (American wandering spider)).